The following is a 760-amino-acid chain: Formin-like protein 8 (760 aa).

A signal peptide spans 1-29 (MAAMFNHPWPNLTLIYFFFIVVLPFQSLS). Positions 52–63 (PLLPPSSNPSPP) are enriched in pro residues. The disordered stretch occupies residues 52 to 71 (PLLPPSSNPSPPSNNSSSSD). A helical transmembrane segment spans residues 78-98 (AVLITAASTLLVAGVFFFCLQ). The tract at residues 204–313 (TEIPLLRGRS…VKLKPLHWDK (110 aa)) is disordered. The span at 253–274 (TPSPPPPIKKGSSPSPPPPPPV) shows a compositional bias: pro residues. In terms of domain architecture, FH2 spans 296–732 (SGGETSKQVK…GSPISPSSQR (437 aa)).

It belongs to the formin-like family. Class-I subfamily. In terms of assembly, interacts with profilin.

The protein resides in the cell membrane. Its function is as follows. Might be involved in the organization and polarity of the actin cytoskeleton. Interacts with the barbed end of actin filaments and nucleates actin-filament polymerization in vitro. This is Formin-like protein 8 (FH8) from Arabidopsis thaliana (Mouse-ear cress).